The chain runs to 397 residues: MSGSSLPGALALSLLLVSGSLLPGPGAAQNAGFVKSPMSETKLTGDAFELYCDVVGSPTPEIQWWYAEVNRAESFRQLWDGARKRRVTVNTAYGSNGVSVLRITRLTLEDSGTYECRASNDPKRNDLRQNPSITWIRAQATISVLQKPRIVTSEEVIIRESLLPVTLQCNLTSSSHTLMYSYWTRNGVELTATRKNASNMEYRINKPRAEDSGEYHCVYHFVSAPKANATIEVKAAPDITGHKRSENKNEGQDAMMYCKSVGYPHPEWIWRKKENGVFEEISNSSGRFFITNKENYTELSIVNLQITEDPGEYECNATNSIGSASVSTVLRVRSHLAPLWPFLGILAEIIILVVIIVVYEKRKRPDEVPDDDEPAGPMKTNSTNNHKDKNLRQRNTN.

The first 28 residues, 1 to 28 (MSGSSLPGALALSLLLVSGSLLPGPGAA), serve as a signal peptide directing secretion. Ig-like domains follow at residues 29–134 (QNAG…PSIT), 148–234 (PRIV…IEVK), and 237–327 (PDIT…ASVS). Topologically, residues 29-338 (QNAGFVKSPM…VLRVRSHLAP (310 aa)) are extracellular. Cysteines 52 and 116 form a disulfide. The narpin; mediates binding with FGFR1 and has antidepressant-like activity stretch occupies residues 149–161 (RIVTSEEVIIRES). C169 and C217 are oxidised to a cystine. 6 N-linked (GlcNAc...) asparagine glycosylation sites follow: N170, N196, N228, N283, N295, and N316. C258 and C315 form a disulfide bridge. A helical membrane pass occupies residues 339-359 (LWPFLGILAEIIILVVIIVVY). Residues 360 to 397 (EKRKRPDEVPDDDEPAGPMKTNSTNNHKDKNLRQRNTN) are Cytoplasmic-facing. The interval 364 to 397 (RPDEVPDDDEPAGPMKTNSTNNHKDKNLRQRNTN) is disordered.

In terms of assembly, interacts with ATP2B1; this interaction stabilizes ATP2B1 and increases ATPase activity; this interaction controls T cell calcium homeostasis following T cell activation. Interacts with XKR8; promoting its localization at the cell membrane. Post-translationally, N-glycosylated. Isoform 1 and isoform 2 are widely expressed with variable levels in brain. Isoform 1 is expressed in cerebellum and midbrain. Isoform 1 and isoform 2 are expressed in cerebral cortex, hippocampus and striatum. Isoform 2 is more abundant in the cerebral cortex than isoform 1.

It is found in the cell membrane. The protein resides in the postsynaptic density. In terms of biological role, probable homophilic and heterophilic cell adhesion molecule involved in long term potentiation at hippocampal excitatory synapses through activation of p38MAPK. May also regulate neurite outgrowth by activating the FGFR1 signaling pathway. May play a role in synaptic plasticity. Also acts as a chaperone for ATP2B1; stabilizes ATP2B1 and increases its ATPase activity. Promotes localization of XKR8 at the cell membrane. The protein is Neuroplastin (Nptn) of Mus musculus (Mouse).